Reading from the N-terminus, the 218-residue chain is Glutathione S-transferase Mu 4 (218 aa).

Residues 2–88 form the GST N-terminal domain; the sequence is SMTLGYWDIR…YIARKHNLCG (87 aa). Glutathione is bound by residues 7 to 8, 46 to 50, 59 to 60, and 72 to 73; these read YW, WLNEK, NL, and QS. The region spanning 90–208 is the GST C-terminal domain; the sequence is TEEEKIRVDI…KSSRFLPKPL (119 aa). Residue Tyr116 participates in substrate binding.

The protein belongs to the GST superfamily. Mu family. As to quaternary structure, homodimer. As to expression, expressed in a wide variety of tissues.

It localises to the cytoplasm. It catalyses the reaction RX + glutathione = an S-substituted glutathione + a halide anion + H(+). It carries out the reaction 1-chloro-2,4-dinitrobenzene + glutathione = 2,4-dinitrophenyl-S-glutathione + chloride + H(+). The enzyme catalyses (13S,14S)-epoxy-(4Z,7Z,9E,11E,16Z,19Z)-docosahexaenoate + glutathione = (13R)-S-glutathionyl-(14S)-hydroxy-(4Z,7Z,9E,11E,16Z,19Z)-docosahexaenoate. The catalysed reaction is leukotriene C4 = leukotriene A4 + glutathione. Its function is as follows. Conjugation of reduced glutathione to a wide number of exogenous and endogenous hydrophobic electrophiles. Catalyzes the conjugation of leukotriene A4 with reduced glutathione (GSH) to form leukotriene C4. Can also catalyze the transfer of a glutathionyl group from glutathione (GSH) to 13(S),14(S)-epoxy-docosahexaenoic acid to form maresin conjugate in tissue regeneration 1 (MCTR1), a bioactive lipid mediator that possess potent anti-inflammatory and proresolving actions. The chain is Glutathione S-transferase Mu 4 (GSTM4) from Homo sapiens (Human).